The sequence spans 85 residues: Small integral membrane protein 35 (85 aa).

Residues 7 to 27 (ISTLGMILGVGLSLLLVSILG) form a helical membrane-spanning segment.

The protein resides in the membrane. The sequence is that of Small integral membrane protein 35 from Mus musculus (Mouse).